Here is a 394-residue protein sequence, read N- to C-terminus: Elongation factor Tu (394 aa).

One can recognise a tr-type G domain in the interval lysine 10–glutamate 204. The interval glycine 19–threonine 26 is G1. Glycine 19 to threonine 26 is a binding site for GTP. Position 26 (threonine 26) interacts with Mg(2+). Positions glycine 60 to alanine 64 are G2. Residues aspartate 81–glycine 84 form a G3 region. Residues aspartate 81–histidine 85 and asparagine 136–aspartate 139 each bind GTP. Residues asparagine 136–aspartate 139 form a G4 region. The segment at serine 174–leucine 176 is G5.

It belongs to the TRAFAC class translation factor GTPase superfamily. Classic translation factor GTPase family. EF-Tu/EF-1A subfamily. In terms of assembly, monomer.

The protein localises to the cytoplasm. The enzyme catalyses GTP + H2O = GDP + phosphate + H(+). Its function is as follows. GTP hydrolase that promotes the GTP-dependent binding of aminoacyl-tRNA to the A-site of ribosomes during protein biosynthesis. The polypeptide is Elongation factor Tu (Vibrio campbellii (strain ATCC BAA-1116)).